Consider the following 141-residue polypeptide: Nucleoside triphosphatase NudI (141 aa).

One can recognise a Nudix hydrolase domain in the interval 1 to 141 (MRQRTIVCPL…RHTLALKGLL (141 aa)). A Nudix box motif is present at residues 38–59 (GGVEPGERIEEALRREVREELG).

It belongs to the Nudix hydrolase family. NudI subfamily. As to quaternary structure, monomer. Mg(2+) serves as cofactor.

The enzyme catalyses a ribonucleoside 5'-triphosphate + H2O = a ribonucleoside 5'-phosphate + diphosphate + H(+). It catalyses the reaction a 2'-deoxyribonucleoside 5'-triphosphate + H2O = a 2'-deoxyribonucleoside 5'-phosphate + diphosphate + H(+). It carries out the reaction dUTP + H2O = dUMP + diphosphate + H(+). The catalysed reaction is dTTP + H2O = dTMP + diphosphate + H(+). The enzyme catalyses dCTP + H2O = dCMP + diphosphate + H(+). In terms of biological role, catalyzes the hydrolysis of nucleoside triphosphates, with a preference for pyrimidine deoxynucleoside triphosphates (dUTP, dTTP and dCTP). The protein is Nucleoside triphosphatase NudI of Salmonella schwarzengrund (strain CVM19633).